Here is a 156-residue protein sequence, read N- to C-terminus: Ribonuclease H (156 aa).

Residues 3 to 144 (ERKLIHIFTD…CDILARSAAE (142 aa)) form the RNase H type-1 domain. Residues Asp12, Glu50, Asp72, and Asp136 each coordinate Mg(2+).

The protein belongs to the RNase H family. Monomer. Requires Mg(2+) as cofactor.

The protein localises to the cytoplasm. The catalysed reaction is Endonucleolytic cleavage to 5'-phosphomonoester.. Endonuclease that specifically degrades the RNA of RNA-DNA hybrids. This Shewanella putrefaciens (strain CN-32 / ATCC BAA-453) protein is Ribonuclease H.